We begin with the raw amino-acid sequence, 718 residues long: Pentatricopeptide repeat-containing protein At1g22960, mitochondrial (718 aa).

A mitochondrion-targeting transit peptide spans Met-1–Ala-11. PPR repeat units lie at residues Ala-167–Pro-201, Ser-202–Pro-236, Thr-237–Phe-271, Ser-272–Val-306, Thr-307–Pro-341, Thr-342–Pro-372, Asp-373–Pro-407, Ser-408–Pro-442, Asp-443–Pro-477, Asp-478–Ala-512, Asp-514–Pro-548, Asp-549–Pro-583, Ser-584–Pro-618, Asn-619–Pro-653, and Asn-654–Pro-688.

This sequence belongs to the PPR family. P subfamily.

Its subcellular location is the mitochondrion. This Arabidopsis thaliana (Mouse-ear cress) protein is Pentatricopeptide repeat-containing protein At1g22960, mitochondrial.